A 380-amino-acid polypeptide reads, in one-letter code: Two-component response regulator ORR28 (380 aa).

Residues 13 to 130 (SAMVIDEDKC…TIQNLWQHLD (118 aa)) enclose the Response regulatory domain. Aspartate 65 carries the 4-aspartylphosphate modification. A DNA-binding region (myb-like GARP) is located at residues 169-223 (RKYYLMWTPHLQKKFLHALEILGEGQISLMIMDVDNIDRKQISTHLQKHRLQLKK). The interval 225 to 245 (LSKASFTKGSNEDTSNPSAKN) is disordered. Over residues 228 to 245 (ASFTKGSNEDTSNPSAKN) the composition is skewed to polar residues.

Belongs to the ARR family. Type-B subfamily. In terms of processing, two-component system major event consists of a His-to-Asp phosphorelay between a sensor histidine kinase (HK) and a response regulator (RR). In plants, the His-to-Asp phosphorelay involves an additional intermediate named Histidine-containing phosphotransfer protein (HPt). This multistep phosphorelay consists of a His-Asp-His-Asp sequential transfer of a phosphate group between first a His and an Asp of the HK protein, followed by the transfer to a conserved His of the HPt protein and finally the transfer to an Asp in the receiver domain of the RR protein.

Its subcellular location is the nucleus. Functionally, transcriptional activator that binds specific DNA sequence. Functions as a response regulator involved in His-to-Asp phosphorelay signal transduction system. Phosphorylation of the Asp residue in the receiver domain activates the ability of the protein to promote the transcription of target genes. May directly activate some type-A response regulators in response to cytokinins. The polypeptide is Two-component response regulator ORR28 (Oryza sativa subsp. indica (Rice)).